We begin with the raw amino-acid sequence, 69 residues long: Nodulin-3 (69 aa).

Positions 1 to 24 are cleaved as a signal peptide; it reads MAKILKFVFAIILFFSLFLLSMEA.

In Pisum sativum (Garden pea), this protein is Nodulin-3 (ENOD3).